The primary structure comprises 503 residues: Cytochrome P450 monooxygenase ecdH (503 aa).

A helical membrane pass occupies residues 8 to 24; the sequence is TTLLCGVISSTLLLLLL. Residues N64, N324, and N413 are each glycosylated (N-linked (GlcNAc...) asparagine). C449 lines the heme pocket.

The protein belongs to the cytochrome P450 family. The cofactor is heme.

It localises to the membrane. Its pathway is antifungal biosynthesis. Cytochrome P450 monooxygenase; part of the gene cluster that mediates the biosynthesis of echinocandin B, a fungal lipidated cyclic hexapeptide that acts as an antifungal agent. Linoleoyl-AMP, produced by the fatty-acyl-AMP ligase ecdI, is transferred to the initiation carrier domain (T0) of ecdA. The linoleoyl-S-phosphopantetheinyl-T0 is sequentially extended with L-ornithine, L-threonine, L-proline, L-homotyrosine, L-threonine, and 4R-methyl-L-proline to form the linear hexapeptide. Thereafter, the terminal condensation (C7) performs macrocyclization of the NRPS product and the cyclic scaffold is released from ecdA. All six of the amino acid residues are hydroxylated, including 4R,5R-dihydroxy-L-ornithine, 4R-hydroxyl-L-proline, 3S,4S-dihydroxy-L-homotyrosine, and 3S-hydroxyl-4S-methyl-L-prolin. In the pathway, all the hydroxylation reactions are proposed to occur following completion of the cyclic peptide, so the unhydroxylated precursor produced by ecdA will undergo six rounds of hydroxylation. Five hydroxylase genes (ecdG, ecdH, ecdK, htyE and htyF) are embedded within the echinocandin B (ecd) and L-homotyrosine (hty) clusters. In Aspergillus rugulosus (Emericella rugulosa), this protein is Cytochrome P450 monooxygenase ecdH.